Here is a 186-residue protein sequence, read N- to C-terminus: Bis(5'-nucleosyl)-tetraphosphatase, symmetrical (186 aa).

Positions 18–132 (RYIHTVGVMN…IYVADYIEPN (115 aa)) constitute an HD domain. His-21 lines the ADP pocket. Fe cation is bound by residues His-21, His-50, and Asp-51. ADP is bound by residues 51–54 (DYAK), His-83, 109–110 (HT), Asp-127, Arg-133, and 170–175 (PVFPDT). Asp-127 contacts Fe cation.

It belongs to the Ap4A hydrolase YqeK family. In terms of assembly, homodimer.

It catalyses the reaction P(1),P(4)-bis(5'-adenosyl) tetraphosphate + H2O = 2 ADP + 2 H(+). Functionally, hydrolyzes diadenosine 5',5'''-P1,P4-tetraphosphate (Ap4A) to yield ADP. The polypeptide is Bis(5'-nucleosyl)-tetraphosphatase, symmetrical (yqeK) (Bacillus subtilis (strain 168)).